Here is a 265-residue protein sequence, read N- to C-terminus: tRNA pseudouridine synthase A (265 aa).

Asp-52 functions as the Nucleophile in the catalytic mechanism. Position 112 (Tyr-112) interacts with substrate.

The protein belongs to the tRNA pseudouridine synthase TruA family. In terms of assembly, homodimer.

The enzyme catalyses uridine(38/39/40) in tRNA = pseudouridine(38/39/40) in tRNA. Formation of pseudouridine at positions 38, 39 and 40 in the anticodon stem and loop of transfer RNAs. The chain is tRNA pseudouridine synthase A from Akkermansia muciniphila (strain ATCC BAA-835 / DSM 22959 / JCM 33894 / BCRC 81048 / CCUG 64013 / CIP 107961 / Muc).